Reading from the N-terminus, the 186-residue chain is Pyridoxal 5'-phosphate synthase subunit PdxT (186 aa).

46-48 provides a ligand contact to L-glutamine; it reads GES. Residue Cys78 is the Nucleophile of the active site. Residues Arg105 and 134–135 contribute to the L-glutamine site; that span reads IR. Active-site charge relay system residues include His170 and Glu172.

This sequence belongs to the glutaminase PdxT/SNO family. In the presence of PdxS, forms a dodecamer of heterodimers. Only shows activity in the heterodimer.

It carries out the reaction aldehydo-D-ribose 5-phosphate + D-glyceraldehyde 3-phosphate + L-glutamine = pyridoxal 5'-phosphate + L-glutamate + phosphate + 3 H2O + H(+). The enzyme catalyses L-glutamine + H2O = L-glutamate + NH4(+). The protein operates within cofactor biosynthesis; pyridoxal 5'-phosphate biosynthesis. Its function is as follows. Catalyzes the hydrolysis of glutamine to glutamate and ammonia as part of the biosynthesis of pyridoxal 5'-phosphate. The resulting ammonia molecule is channeled to the active site of PdxS. In Clostridium acetobutylicum (strain ATCC 824 / DSM 792 / JCM 1419 / IAM 19013 / LMG 5710 / NBRC 13948 / NRRL B-527 / VKM B-1787 / 2291 / W), this protein is Pyridoxal 5'-phosphate synthase subunit PdxT.